Here is a 537-residue protein sequence, read N- to C-terminus: Chaperonin GroEL 2 (537 aa).

ATP contacts are provided by residues 29–32, 86–90, Gly-412, and Asp-495; these read TLGP and DGTTT.

Belongs to the chaperonin (HSP60) family. In terms of assembly, forms a cylinder of 14 subunits composed of two heptameric rings stacked back-to-back. Interacts with the co-chaperonin GroES.

The protein resides in the cytoplasm. It carries out the reaction ATP + H2O + a folded polypeptide = ADP + phosphate + an unfolded polypeptide.. Functionally, together with its co-chaperonin GroES, plays an essential role in assisting protein folding. The GroEL-GroES system forms a nano-cage that allows encapsulation of the non-native substrate proteins and provides a physical environment optimized to promote and accelerate protein folding. The protein is Chaperonin GroEL 2 of Paenarthrobacter aurescens (strain TC1).